The chain runs to 380 residues: Interleukin-13 receptor subunit alpha-2 (380 aa).

The N-terminal stretch at 1-26 (MAFVCLAIGCLYTFLISTTFGCTSSS) is a signal peptide. The Extracellular portion of the chain corresponds to 27 to 343 (DTEIKVNPPQ…EDLSKKTLLR (317 aa)). Fibronectin type-III domains follow at residues 34-134 (PPQD…SPQG), 139-235 (KVQD…LQNI), and 240-333 (PPVY…CWEG). Cys65 and Cys113 form a disulfide bridge. N-linked (GlcNAc...) asparagine glycosylation occurs at Asn115. 2 cysteine pairs are disulfide-bonded: Cys145–Cys155 and Cys184–Cys197. N-linked (GlcNAc...) asparagine glycosylation is found at Asn215, Asn290, and Asn299. A disulfide bridge connects residues Cys269 and Cys316. The short motif at 322 to 326 (WSEWS) is the WSXWS motif element. A helical transmembrane segment spans residues 344-363 (FWLPFGFILILVIFVTGLLL). Residues 364-380 (RKPNTYPKMIPEFFCDT) lie on the Cytoplasmic side of the membrane.

This sequence belongs to the type I cytokine receptor family. Type 5 subfamily. In terms of assembly, interacts with IL4RA. Interacts with high affinity to interleukin-13 (IL13), but not to interleukin-4 (IL4). Post-translationally, cleaved by MMP8 leading to a soluble form that is also able to interact with IL13.

The protein localises to the cell membrane. Its function is as follows. Cell surface receptor that plays a role in the regulation of IL-13-mediated responses. Functions as a decoy receptor that inhibits IL-13- and IL-4-mediated signal transduction via the JAK-STAT pathway and thereby modulates immune responses and inflammation. Serves as a functional signaling receptor for IL-13 in an alternative pathway involving AP-1 ultimately leading to the production of TGFB1. This chain is Interleukin-13 receptor subunit alpha-2 (IL13RA2), found in Homo sapiens (Human).